Here is a 503-residue protein sequence, read N- to C-terminus: uncharacterized protein (503 aa).

2 ABC transporter domains span residues 8 to 249 and 261 to 499; these read VPVA…LGRD and IVDQ…MSAI. 43–50 provides a ligand contact to ATP; sequence GKNGAGKS.

Belongs to the ABC transporter superfamily.

Its function is as follows. Probably part of a binding-protein-dependent transport system YphDEF. Probably responsible for energy coupling to the transport system. This is an uncharacterized protein from Escherichia coli (strain K12).